The sequence spans 76 residues: Mu-scoloptoxin(15)-Ssm1a (76 aa).

An N-terminal signal peptide occupies residues 1 to 23 (MEKKIIFLVFLVALLALPGFIST). Residues 33 to 36 (KKRK) are important for inhibition of KCNQ4. 2 cysteine pairs are disulfide-bonded: C43/C69 and C47/C71.

It belongs to the scoloptoxin-15 family. In terms of tissue distribution, expressed by the venom gland.

The protein resides in the secreted. In terms of biological role, blocks voltage-gated potassium channels Kv7.4/KCNQ4 (IC(50)=2.5 uM), Kv7.1/KCNQ1 (IC(50)=2.8 uM), Kv7.2/KCNQ2 (IC(50)=2.7 uM) and Kv7.5/KCNQ5 (IC(50)=2.7 uM). Targets the pore domain, in particular negatively charged residues 'Asp-266' and 'Asp-288', of KCNQ4 and probably other KCNQ channel family members where these residues are conserved. In vivo, shows vasoconstrictive activity resulting in acute hypertension when injected intravenously in mice. Also induces coronary vasospasms ultimately leading to heart failure. Induces seizures when injected into the hippocampus of mice. Decreases respiratory rate while increasing respiratory amplitude, probably by triggering a contraction of the bronchial ring. This Scolopendra mutilans (Chinese red-headed centipede) protein is Mu-scoloptoxin(15)-Ssm1a.